The sequence spans 92 residues: Bombyxin A-9 (92 aa).

Residues Met-1–Thr-19 form the signal peptide. Gln-20 bears the Pyrrolidone carboxylic acid mark. Cystine bridges form between Cys-29–Cys-79, Cys-41–Cys-92, and Cys-78–Cys-83. Positions Ser-50–Gln-71 are cleaved as a propeptide — c peptide like.

The protein belongs to the insulin family. As to quaternary structure, heterodimer of a B chain and an A chain linked by two disulfide bonds.

It is found in the secreted. Its function is as follows. Brain peptide responsible for activation of prothoracic glands to produce ecdysone in insects. The polypeptide is Bombyxin A-9 (BBXA9) (Bombyx mori (Silk moth)).